A 577-amino-acid polypeptide reads, in one-letter code: MNIQALLSEKVRQAMIAAGAPADCEPQVRQSAKVQFGDYQANGMMAVAKKLGMAPRQLAEQVLTHLDLNGIASKVEIAGPGFINIFLDPTFLAENVQQALKSDRLGVATPEKQTIVVDYSAPNVAKEMHVGHLRSTIIGDAAVRTLEFLGHKVIRANHVGDWGTQFGMLIAWLEKQQQENAGEMALADLEGFYRDAKKHYDEDEEFAERARNYVVKLQSGDEYFREMWRKLVDITMTQNQITYDRLNVTLTRDDVMGESLYNPMLPGIVADLKAKGLAVESEGATVVFLDEFKNKEGDPMGVIIQKKDGGYLYTTTDIACAKYRYETLHADRVLYYIDSRQHQHLMQAWAIVRKAGYVPESVPLEHHMFGMMLGKDGKPFKTRAGGTVKLADLLDEALERARRLVAEKNPDMPADELEKLANAVGIGAVKYADLSKNRTTDYVFDWDNMLAFEGNTAPYMQYAYTRVLSVFRKAEIAEEELAAAPVIIREDREAQLAARLLQFEETLTVVAREGTPHVMCAYLYDLAGLFSSFYEHCPILSAENEEVRNSRLKLALLTAKTLKLGLDTLGIETVERM.

Residues 122 to 132 carry the 'HIGH' region motif; sequence PNVAKEMHVGH.

It belongs to the class-I aminoacyl-tRNA synthetase family. As to quaternary structure, monomer.

Its subcellular location is the cytoplasm. The enzyme catalyses tRNA(Arg) + L-arginine + ATP = L-arginyl-tRNA(Arg) + AMP + diphosphate. This Escherichia fergusonii (strain ATCC 35469 / DSM 13698 / CCUG 18766 / IAM 14443 / JCM 21226 / LMG 7866 / NBRC 102419 / NCTC 12128 / CDC 0568-73) protein is Arginine--tRNA ligase.